We begin with the raw amino-acid sequence, 479 residues long: UDP-N-acetylmuramate--L-alanine ligase (479 aa).

G128 to T134 is an ATP binding site.

This sequence belongs to the MurCDEF family.

Its subcellular location is the cytoplasm. The enzyme catalyses UDP-N-acetyl-alpha-D-muramate + L-alanine + ATP = UDP-N-acetyl-alpha-D-muramoyl-L-alanine + ADP + phosphate + H(+). It participates in cell wall biogenesis; peptidoglycan biosynthesis. Its function is as follows. Cell wall formation. This is UDP-N-acetylmuramate--L-alanine ligase from Psychrobacter cryohalolentis (strain ATCC BAA-1226 / DSM 17306 / VKM B-2378 / K5).